The sequence spans 218 residues: Small ribosomal subunit protein uS3c (218 aa).

One can recognise a KH type-2 domain in the interval 47 to 118 (VQKNMRTSSG…KLNIAVTRIA (72 aa)).

It belongs to the universal ribosomal protein uS3 family. Part of the 30S ribosomal subunit.

The protein localises to the plastid. It localises to the chloroplast. The protein is Small ribosomal subunit protein uS3c (rps3) of Solanum bulbocastanum (Wild potato).